The following is a 456-amino-acid chain: uncharacterized protein (456 aa).

One can recognise a TRAM domain in the interval 3–61 (TIKKNEVKTGKVIDLTHEGHGVVKVDRYPIFIPNALIDEEIKFKLIKVKKNFAIGKLIE). [4Fe-4S] cluster-binding residues include cysteine 74, cysteine 80, cysteine 83, and cysteine 162. Positions 286, 315, 336, and 384 each coordinate S-adenosyl-L-methionine. The active-site Nucleophile is cysteine 411.

Belongs to the class I-like SAM-binding methyltransferase superfamily. RNA M5U methyltransferase family.

This is an uncharacterized protein from Staphylococcus epidermidis (strain ATCC 12228 / FDA PCI 1200).